Consider the following 443-residue polypeptide: Ribosomal protein uS12 methylthiotransferase RimO (443 aa).

Positions 10-120 constitute an MTTase N-terminal domain; the sequence is PRVGFVSLGC…VVKAVHQHLP (111 aa). 6 residues coordinate [4Fe-4S] cluster: Cys19, Cys55, Cys84, Cys151, Cys155, and Cys158. The Radical SAM core domain occupies 137–375; it reads LTPAHYAYLK…DFQEDISTQR (239 aa). The TRAM domain maps to 377–443; that stretch reads ERWIGRDITV…VHDLYARPLP (67 aa).

This sequence belongs to the methylthiotransferase family. RimO subfamily. The cofactor is [4Fe-4S] cluster.

It is found in the cytoplasm. It carries out the reaction L-aspartate(89)-[ribosomal protein uS12]-hydrogen + (sulfur carrier)-SH + AH2 + 2 S-adenosyl-L-methionine = 3-methylsulfanyl-L-aspartate(89)-[ribosomal protein uS12]-hydrogen + (sulfur carrier)-H + 5'-deoxyadenosine + L-methionine + A + S-adenosyl-L-homocysteine + 2 H(+). Functionally, catalyzes the methylthiolation of an aspartic acid residue of ribosomal protein uS12. This is Ribosomal protein uS12 methylthiotransferase RimO from Aromatoleum aromaticum (strain DSM 19018 / LMG 30748 / EbN1) (Azoarcus sp. (strain EbN1)).